The sequence spans 407 residues: uncharacterized protein (407 aa).

The segment at 145-231 is disordered; it reads EANRFGRSNS…DPLTSITSDT (87 aa). Residues 158–175 are compositionally biased toward basic residues; the sequence is SNSRSKSSRSRSNNRSKS. The span at 176–196 shows a compositional bias: low complexity; that stretch reads SRSSSTQSKSNNRSNSRSNSK. The N-acetyltransferase domain maps to 271 to 407; it reads IVFETLDQND…NHKIHMEKDI (137 aa).

It localises to the virion. This is an uncharacterized protein from Acanthamoeba polyphaga (Amoeba).